Here is a 93-residue protein sequence, read N- to C-terminus: YcgL domain-containing protein Shew_2183 (93 aa).

Positions 1 to 85 (MICAVYKSRL…PPVNLLEEYK (85 aa)) constitute a YcgL domain.

The sequence is that of YcgL domain-containing protein Shew_2183 from Shewanella loihica (strain ATCC BAA-1088 / PV-4).